The sequence spans 515 residues: Fatty acyl-CoA reductase 1 (515 aa).

The Cytoplasmic portion of the chain corresponds to 1–465; it reads MLSIPEFYQG…ARKHLNKLRN (465 aa). Residues 466–484 form a helical membrane-spanning segment; that stretch reads IRYGFNTILVVLIWRVFIA. Residues 485 to 515 lie on the Peroxisomal side of the membrane; it reads RSQMARNIWYFVVSMCFKFLSYFRASSTMRY.

It belongs to the fatty acyl-CoA reductase family.

It localises to the peroxisome membrane. The enzyme catalyses a long-chain fatty acyl-CoA + 2 NADPH + 2 H(+) = a long-chain primary fatty alcohol + 2 NADP(+) + CoA. It catalyses the reaction hexadecanoyl-CoA + 2 NADPH + 2 H(+) = hexadecan-1-ol + 2 NADP(+) + CoA. It carries out the reaction octadecanoyl-CoA + 2 NADPH + 2 H(+) = octadecan-1-ol + 2 NADP(+) + CoA. The catalysed reaction is (9Z)-octadecenoyl-CoA + 2 NADPH + 2 H(+) = (9Z)-octadecen-1-ol + 2 NADP(+) + CoA. The enzyme catalyses (9Z,12Z)-octadecadienoyl-CoA + 2 NADPH + 2 H(+) = (9Z,12Z)-octadecadien-1-ol + 2 NADP(+) + CoA. It catalyses the reaction eicosanoyl-CoA + 2 NADPH + 2 H(+) = eicosan-1-ol + 2 NADP(+) + CoA. It carries out the reaction 16-methylheptadecanoyl-CoA + 2 NADPH + 2 H(+) = 16-methylheptadecan-1-ol + 2 NADP(+) + CoA. The catalysed reaction is 18-methylnonadecanoyl-CoA + 2 NADPH + 2 H(+) = 18-methylnonadecan-1-ol + 2 NADP(+) + CoA. Catalyzes the reduction of saturated and unsaturated C16 or C18 fatty acyl-CoA to fatty alcohols. It plays an essential role in the production of ether lipids/plasmalogens which synthesis requires fatty alcohols. In parallel, it is also required for wax monoesters production since fatty alcohols also constitute a substrate for their synthesis. In Xenopus laevis (African clawed frog), this protein is Fatty acyl-CoA reductase 1 (far1).